The sequence spans 234 residues: NAD-dependent protein deacylase (234 aa).

A Deacetylase sirtuin-type domain is found at 1 to 234; that stretch reads MKNLVVLTGA…ELKQLLIPAP (234 aa). Residue 9 to 28 coordinates NAD(+); the sequence is GAGMSAESGISTFRDAGGLW. Substrate contacts are provided by Y53 and R56. 86 to 89 is a binding site for NAD(+); that stretch reads QNVD. The active-site Proton acceptor is H104. 175–177 is a binding site for NAD(+); sequence GTS.

It belongs to the sirtuin family. Class III subfamily.

It is found in the cytoplasm. It carries out the reaction N(6)-acetyl-L-lysyl-[protein] + NAD(+) + H2O = 2''-O-acetyl-ADP-D-ribose + nicotinamide + L-lysyl-[protein]. The enzyme catalyses N(6)-succinyl-L-lysyl-[protein] + NAD(+) + H2O = 2''-O-succinyl-ADP-D-ribose + nicotinamide + L-lysyl-[protein]. Functionally, NAD-dependent lysine deacetylase and desuccinylase that specifically removes acetyl and succinyl groups on target proteins. Modulates the activities of several proteins which are inactive in their acylated form. The protein is NAD-dependent protein deacylase of Bacteroides thetaiotaomicron (strain ATCC 29148 / DSM 2079 / JCM 5827 / CCUG 10774 / NCTC 10582 / VPI-5482 / E50).